The primary structure comprises 420 residues: MMELRVLLLLLLLTLLGAMGSLCLANSDTQAKGAHSNNMTIKTFRIFDDSESEFEEIPWDELDESGEGSGDQAPVSRSARKPIRRNITKEAEQYLSSQWLTKFVPSLYTVVFIVGLPLNLLAIIIFLFKMKVRKPAVVYMLNLAIADVFFVSVLPFKIAYHLSGNDWLFGPGMCRIVTAIFYCNMYCSVLLIASISVDRFLAVVYPMHSLSWRTMSRAYMACSFIWLISIASTIPLLVTEQTQKIPRLDITTCHDVLDLKDLKDFYIYYFSSFCLLFFFVPFIITTICYIGIIRSLSSSSIENSCKKTRALFLAVVVLCVFIICFGPTNVLFLTHYLQEANEFLYFAYILSACVGSVSCCLDPLIYYYASSQCQRYLYSLLCCRKVSEPGSSTGQLMSTAMKNDNCSTNAKSSIYKKLLA.

Residues 1–20 form the signal peptide; sequence MMELRVLLLLLLLTLLGAMG. Positions 21–42 are cleaved as a propeptide — removed for receptor activation; sequence SLCLANSDTQAKGAHSNNMTIK. A glycan (N-linked (GlcNAc...) asparagine) is linked at asparagine 38. Topologically, residues 43-101 are extracellular; that stretch reads TFRIFDDSESEFEEIPWDELDESGEGSGDQAPVSRSARKPIRRNITKEAEQYLSSQWLT. A disordered region spans residues 61 to 80; it reads ELDESGEGSGDQAPVSRSAR. N-linked (GlcNAc...) asparagine glycosylation occurs at asparagine 86. Residues 102 to 127 traverse the membrane as a helical segment; sequence KFVPSLYTVVFIVGLPLNLLAIIIFL. At 128 to 136 the chain is on the cytoplasmic side; sequence FKMKVRKPA. A helical membrane pass occupies residues 137-156; sequence VVYMLNLAIADVFFVSVLPF. The Extracellular portion of the chain corresponds to 157 to 175; sequence KIAYHLSGNDWLFGPGMCR. Cysteine 174 and cysteine 253 form a disulfide bridge. The chain crosses the membrane as a helical span at residues 176-197; the sequence is IVTAIFYCNMYCSVLLIASISV. Residues 198–217 are Cytoplasmic-facing; the sequence is DRFLAVVYPMHSLSWRTMSR. A helical transmembrane segment spans residues 218-238; that stretch reads AYMACSFIWLISIASTIPLLV. Over 239–267 the chain is Extracellular; that stretch reads TEQTQKIPRLDITTCHDVLDLKDLKDFYI. The helical transmembrane segment at 268-287 threads the bilayer; that stretch reads YYFSSFCLLFFFVPFIITTI. The Cytoplasmic portion of the chain corresponds to 288 to 310; sequence CYIGIIRSLSSSSIENSCKKTRA. The chain crosses the membrane as a helical span at residues 311–333; sequence LFLAVVVLCVFIICFGPTNVLFL. Residues 334–345 are Extracellular-facing; it reads THYLQEANEFLY. A helical transmembrane segment spans residues 346-369; the sequence is FAYILSACVGSVSCCLDPLIYYYA. Residues 370-420 lie on the Cytoplasmic side of the membrane; that stretch reads SSQCQRYLYSLLCCRKVSEPGSSTGQLMSTAMKNDNCSTNAKSSIYKKLLA.

This sequence belongs to the G-protein coupled receptor 1 family. Post-translationally, proteolytic cleavage generates a new N-terminus that functions as a tethered ligand.

It is found in the cell membrane. Functionally, high affinity receptor that binds the activated thrombin, leading to calcium release from intracellular stores. The thrombin-activated receptor signaling pathway is mediated through PTX-insensitive G proteins, activation of phospholipase C resulting in the production of 1D-myo-inositol 1,4,5-trisphosphate (InsP3) which binds to InsP3 receptors causing calcium release from the stores. In Xenopus laevis (African clawed frog), this protein is Proteinase-activated receptor 1.